The primary structure comprises 499 residues: Cytochrome P450 2M1 (499 aa).

Cys441 is a binding site for heme.

The protein belongs to the cytochrome P450 family. It depends on heme as a cofactor. In terms of tissue distribution, in kidney and in liver from juvenile and sexually mature trout from both sexes.

The protein localises to the endoplasmic reticulum membrane. It localises to the microsome membrane. It carries out the reaction an organic molecule + reduced [NADPH--hemoprotein reductase] + O2 = an alcohol + oxidized [NADPH--hemoprotein reductase] + H2O + H(+). Has (omega-6)-hydroxylation activity toward lauric acid. The protein is Cytochrome P450 2M1 (cyp2m1) of Oncorhynchus mykiss (Rainbow trout).